Here is a 238-residue protein sequence, read N- to C-terminus: uncharacterized protein (238 aa).

Residues 1–20 (MPNLHSLPLGTRPENAIRNN) form a disordered region.

Belongs to the PEP2 family.

This is an uncharacterized protein from Emericella nidulans (strain FGSC A4 / ATCC 38163 / CBS 112.46 / NRRL 194 / M139) (Aspergillus nidulans).